The primary structure comprises 348 residues: Glucose 1-dehydrogenase 2 (348 aa).

Residue Cys-39 participates in Zn(2+) binding. Residue Thr-41 coordinates substrate. Zn(2+) is bound by residues His-64 and Glu-65. Residues Glu-110 and Glu-146 each coordinate substrate. Glu-146 lines the Zn(2+) pocket. NADP(+) contacts are provided by residues 178 to 181 (AGPV), 260 to 262 (LGV), and 289 to 291 (SVN). Asn-291 provides a ligand contact to substrate.

Belongs to the zinc-containing alcohol dehydrogenase family. Glucose 1-dehydrogenase subfamily. It depends on Zn(2+) as a cofactor.

The enzyme catalyses D-glucose + NAD(+) = D-glucono-1,5-lactone + NADH + H(+). It catalyses the reaction D-glucose + NADP(+) = D-glucono-1,5-lactone + NADPH + H(+). Catalyzes the NAD(P)(+)-dependent oxidation of D-glucose to D-gluconate via gluconolactone. Can utilize both NAD(+) and NADP(+) as electron acceptor. Is involved in the degradation of glucose through a non-phosphorylative variant of the Entner-Doudoroff pathway. This is Glucose 1-dehydrogenase 2 from Vulcanisaeta moutnovskia (strain 768-28).